A 189-amino-acid chain; its full sequence is Interferon alpha-B (189 aa).

A signal peptide spans 1-23 (MAPAWSFLLALLLLSCNAICSLG). Disulfide bonds link Cys-24–Cys-122 and Cys-52–Cys-162.

This sequence belongs to the alpha/beta interferon family.

It localises to the secreted. In terms of biological role, produced by macrophages, IFN-alpha have antiviral activities. Interferon stimulates the production of two enzymes: a protein kinase and an oligoadenylate synthetase. The protein is Interferon alpha-B (IFNAB) of Bos taurus (Bovine).